A 281-amino-acid polypeptide reads, in one-letter code: Hexaprenyl pyrophosphate synthase (281 aa).

3 residues coordinate isopentenyl diphosphate: Lys-42, Arg-45, and His-74. Positions 81 and 85 each coordinate Mg(2+). Arg-91 lines the isopentenyl diphosphate pocket.

This sequence belongs to the FPP/GGPP synthase family. As to quaternary structure, homodimer. Mg(2+) is required as a cofactor.

The enzyme catalyses 2 isopentenyl diphosphate + (2E,6E,10E)-geranylgeranyl diphosphate = all-trans-hexaprenyl diphosphate + 2 diphosphate. Its function is as follows. Catalyzes consecutive E-type condensation of two isopentenyl pyrophosphate (IPP) molecules with an allylic substrate such as geranylgeranyl diphosphate (GGPP), farnesyl diphosphate (FPP) or geranyl diphosphate (GPP) to yield the medium-chain product trans-C30-hexaprenyl pyrophosphate (HexPP). GGPP is the physiological substrate. The protein is Hexaprenyl pyrophosphate synthase (gdS-2) of Saccharolobus solfataricus (strain ATCC 35092 / DSM 1617 / JCM 11322 / P2) (Sulfolobus solfataricus).